Reading from the N-terminus, the 458-residue chain is Argininosuccinate lyase (458 aa).

It belongs to the lyase 1 family. Argininosuccinate lyase subfamily.

It is found in the cytoplasm. It carries out the reaction 2-(N(omega)-L-arginino)succinate = fumarate + L-arginine. It participates in amino-acid biosynthesis; L-arginine biosynthesis; L-arginine from L-ornithine and carbamoyl phosphate: step 3/3. This chain is Argininosuccinate lyase, found in Actinobacillus pleuropneumoniae serotype 3 (strain JL03).